We begin with the raw amino-acid sequence, 1164 residues long: Auxin response factor 7 (1164 aa).

The segment at residues 127-229 (FCKTLTASDT…QLLLGIRRAN (103 aa)) is a DNA-binding region (TF-B3). Disordered stretches follow at residues 451–505 (HNNL…QQQL), 536–555 (QQLQ…QQQQ), 570–728 (HQQP…LLQQ), 765–858 (FLSP…SSSG), and 903–930 (KSKA…GENN). A compositionally biased stretch (polar residues) spans 464 to 489 (LSFQTPHGGISSSNLQFNKQNQQAPM). The span at 570–635 (HQQPLQQQTQ…SQQASTHHLQ (66 aa)) shows a compositional bias: low complexity. The segment covering 637–651 (QLVSGSMASSVITPP) has biased composition (polar residues). Positions 652-671 (SSSLNQSFQQQQQQSKQLQQ) are enriched in low complexity. A compositionally biased stretch (polar residues) spans 678–710 (ASTSQSSVIETSKSSSNLMSAPPQETQFSRQVE). 2 stretches are compositionally biased toward low complexity: residues 711–728 (QQQP…LLQQ) and 765–790 (FLSP…TLSQ). Over residues 791–808 (GHQFPSSCTNNGLSTLQP) the composition is skewed to polar residues. The span at 841-851 (PSSSTSPSTNN) shows a compositional bias: low complexity. A compositionally biased stretch (polar residues) spans 903-921 (KSKASLTDHQLEASASGTS). Positions 1037–1130 (RTYTKVQKRG…EVQQMSLDGN (94 aa)) constitute a PB1 domain. The interval 1145-1164 (DSGNAWRGHYDDNSATSFNR) is disordered.

This sequence belongs to the ARF family. In terms of assembly, homodimers and heterodimers. Interacts with the auxin-responsive proteins IAA1 and IAA12 (BODENLOS). Interacts (via PB1 domain) with IAA17 (via PB1 domain). Interacts with IAA19. Interacts with ARF5. Binds to JMJ30. Binds to ATXR2 in the nucleus. As to expression, expressed in the whole plant.

It is found in the nucleus. Its function is as follows. Auxin response factors (ARFs) are transcriptional factors that bind specifically to the DNA sequence 5'-TGTCTC-3' found in the auxin-responsive promoter elements (AuxREs). Acts as a transcriptional activator of several tropic stimulus-induced (TSI) genes, including SAUR50. Formation of heterodimers with Aux/IAA proteins may alter their ability to modulate early auxin response genes expression. Required for differential growth responses of aerial tissues. Involved in ethylene responses. Regulates lateral root formation through direct regulation of LBD16 and/or LBD29. Functionally redundant with ARF19. Mediates embryo axis formation and vascular tissues differentiation. Functionally redundant with ARF5. Involved in cellular dedifferentiation during callus formation on callus-inducing medium (CIM) and in an ATXR2-dependent manner. In Arabidopsis thaliana (Mouse-ear cress), this protein is Auxin response factor 7.